The following is a 240-amino-acid chain: Pyridoxine 5'-phosphate synthase (240 aa).

N7 contributes to the 3-amino-2-oxopropyl phosphate binding site. 9–10 provides a ligand contact to 1-deoxy-D-xylulose 5-phosphate; sequence DH. Position 18 (R18) interacts with 3-amino-2-oxopropyl phosphate. Catalysis depends on H43, which acts as the Proton acceptor. 1-deoxy-D-xylulose 5-phosphate-binding residues include R45 and H50. E70 (proton acceptor) is an active-site residue. T100 serves as a coordination point for 1-deoxy-D-xylulose 5-phosphate. H191 (proton donor) is an active-site residue. 3-amino-2-oxopropyl phosphate contacts are provided by residues G192 and 213 to 214; that span reads GH.

This sequence belongs to the PNP synthase family. In terms of assembly, homooctamer; tetramer of dimers.

It is found in the cytoplasm. It catalyses the reaction 3-amino-2-oxopropyl phosphate + 1-deoxy-D-xylulose 5-phosphate = pyridoxine 5'-phosphate + phosphate + 2 H2O + H(+). It participates in cofactor biosynthesis; pyridoxine 5'-phosphate biosynthesis; pyridoxine 5'-phosphate from D-erythrose 4-phosphate: step 5/5. Its function is as follows. Catalyzes the complicated ring closure reaction between the two acyclic compounds 1-deoxy-D-xylulose-5-phosphate (DXP) and 3-amino-2-oxopropyl phosphate (1-amino-acetone-3-phosphate or AAP) to form pyridoxine 5'-phosphate (PNP) and inorganic phosphate. The chain is Pyridoxine 5'-phosphate synthase from Crocosphaera subtropica (strain ATCC 51142 / BH68) (Cyanothece sp. (strain ATCC 51142)).